A 692-amino-acid chain; its full sequence is Methionine--tRNA ligase (692 aa).

A 'HIGH' region motif is present at residues 12 to 22 (PYANGSFHIGH). Cys-143, Cys-146, Cys-156, and Cys-159 together coordinate Zn(2+). Positions 341 to 345 (KMSKS) match the 'KMSKS' region motif. Lys-344 provides a ligand contact to ATP. Residues 586–692 (DFAKIDLRIA…PGAQPGMRVR (107 aa)) enclose the tRNA-binding domain.

Belongs to the class-I aminoacyl-tRNA synthetase family. MetG type 1 subfamily. As to quaternary structure, homodimer. Zn(2+) is required as a cofactor.

It is found in the cytoplasm. The enzyme catalyses tRNA(Met) + L-methionine + ATP = L-methionyl-tRNA(Met) + AMP + diphosphate. Is required not only for elongation of protein synthesis but also for the initiation of all mRNA translation through initiator tRNA(fMet) aminoacylation. In Bordetella pertussis (strain Tohama I / ATCC BAA-589 / NCTC 13251), this protein is Methionine--tRNA ligase.